Here is a 1108-residue protein sequence, read N- to C-terminus: Eukaryotic translation initiation factor 2-alpha kinase 3 (1108 aa).

A signal peptide spans 1–27 (MERATQPRPRALLLLFLLLGCAAGISA). Over 28–506 (VARARSLLAP…HYSKNIRKKD (479 aa)) the chain is Lumenal. A disordered region spans residues 71 to 92 (EALPAASGEQESRATESDDDVE). N253 is a glycosylation site (N-linked (GlcNAc...) asparagine). The chain crosses the membrane as a helical span at residues 507–527 (PILLLHWWKEIFGTILLCIVA). Residues 528–1108 (TTFIVRRLFH…SSTFSPLPGN (581 aa)) lie on the Cytoplasmic side of the membrane. A disordered region spans residues 542-563 (RQRKESETQCQTESKYDSVSAD). The Protein kinase domain occupies 585–1069 (FEPIQCMGRG…ATDIIENAVF (485 aa)). 591–599 (MGRGGFGVV) provides a ligand contact to ATP. Y611 is modified (phosphotyrosine; by autocatalysis). K614 lines the ATP pocket. Residues 639-880 (EHPGIVRYFN…SPKVYLYIQM (242 aa)) are insert loop. S707 bears the Phosphoserine mark. Disordered stretches follow at residues 772–818 (DEGH…RMNR) and 832–856 (FKHSSSRSSSEATLSTSPTRPTTLS). The segment covering 785–798 (SPYTRSREGTSSSI) has biased composition (polar residues). A Phosphothreonine modification is found at T794. The span at 837-856 (SRSSSEATLSTSPTRPTTLS) shows a compositional bias: low complexity. The Proton acceptor role is filled by D929. At T974 the chain carries Phosphothreonine. The tract at residues 1080-1108 (LRQRSRSLSSSGTKHSRQPSSTFSPLPGN) is disordered. Residue S1086 is modified to Phosphoserine. Residues 1097–1108 (QPSSTFSPLPGN) show a composition bias toward polar residues.

It belongs to the protein kinase superfamily. Ser/Thr protein kinase family. GCN2 subfamily. Forms dimers with HSPA5/BIP in resting cells. Homotetramerizes in response to endoplasmic reticulum (ER) stress, leading to its activation. Interacts with HSP90B1/GRP94. Interacts with DNAJC3; inhibiting EIF2AK3/PERK activity. Interacts with ATAD3A; ATAD3A and EIF2S1/eIF-2-alpha occupy a common binding site within the cytoplasmic loop of EIF2AK3/PERK, leading to prevent EIF2AK3/PERK association with its substrate EIF2S1/eIF-2-alpha. Interacts with MFN2. Interacts with TMEM33. Interacts with PDIA6. Interacts with LACC1. Oligomerization of the N-terminal ER luminal domain by ER stress promotes EIF2AK3/PERK trans-autophosphorylation of the C-terminal cytoplasmic kinase domain at multiple residues including Thr-974 on the kinase activation loop. Autophosphorylated at Tyr-611 following endoplasmic reticulum stress, leading to activate its activity. Dephosphorylated at Tyr-611 by PTPN1/PTP1B, leading to inactivate its enzyme activity. Phosphorylation at Thr-794 by AKT (AKT1, AKT2 and/or AKT3) inactivates EIF2AK3/PERK. Post-translationally, ADP-ribosylated by PARP16 upon ER stress, which increases kinase activity. In terms of tissue distribution, ubiquitous.

The protein resides in the endoplasmic reticulum membrane. The enzyme catalyses L-seryl-[protein] + ATP = O-phospho-L-seryl-[protein] + ADP + H(+). It carries out the reaction L-threonyl-[protein] + ATP = O-phospho-L-threonyl-[protein] + ADP + H(+). It catalyses the reaction L-tyrosyl-[protein] + ATP = O-phospho-L-tyrosyl-[protein] + ADP + H(+). With respect to regulation, inhibited by HSPA5/BIP in absence of stress. Perturbation in protein folding in the endoplasmic reticulum (ER) promotes reversible dissociation from HSPA5/BIP and oligomerization, resulting in trans-autophosphorylation and kinase activity induction. Inactivated following phosphorylation at Thr-794 by AKT (AKT1, AKT2 and/or AKT3). Inhibited by ATAD3A at mitochondria-endoplasmic reticulum contact sites, providing a safe haven for mitochondrial protein translation during ER stress. Functionally, metabolic-stress sensing protein kinase that phosphorylates the alpha subunit of eukaryotic translation initiation factor 2 (EIF2S1/eIF-2-alpha) in response to various stress, such as unfolded protein response (UPR). Key effector of the integrated stress response (ISR) to unfolded proteins: EIF2AK3/PERK specifically recognizes and binds misfolded proteins, leading to its activation and EIF2S1/eIF-2-alpha phosphorylation. EIF2S1/eIF-2-alpha phosphorylation in response to stress converts EIF2S1/eIF-2-alpha in a global protein synthesis inhibitor, leading to a global attenuation of cap-dependent translation, while concomitantly initiating the preferential translation of ISR-specific mRNAs, such as the transcriptional activators ATF4 and QRICH1, and hence allowing ATF4- and QRICH1-mediated reprogramming. The EIF2AK3/PERK-mediated unfolded protein response increases mitochondrial oxidative phosphorylation by promoting ATF4-mediated expression of COX7A2L/SCAF1, thereby increasing formation of respiratory chain supercomplexes. In contrast to most subcellular compartments, mitochondria are protected from the EIF2AK3/PERK-mediated unfolded protein response due to EIF2AK3/PERK inhibition by ATAD3A at mitochondria-endoplasmic reticulum contact sites. In addition to EIF2S1/eIF-2-alpha, also phosphorylates NFE2L2/NRF2 in response to stress, promoting release of NFE2L2/NRF2 from the BCR(KEAP1) complex, leading to nuclear accumulation and activation of NFE2L2/NRF2. Serves as a critical effector of unfolded protein response (UPR)-induced G1 growth arrest due to the loss of cyclin-D1 (CCND1). Involved in control of mitochondrial morphology and function. This chain is Eukaryotic translation initiation factor 2-alpha kinase 3 (Eif2ak3), found in Rattus norvegicus (Rat).